Reading from the N-terminus, the 72-residue chain is IYGGDPQELSLLIKPYARRIEISGETLFCYTPDPEQVRAQLRGHRGLRLLERPPNLEDVFLRLTGREMGKYQ.

The protein belongs to the ABC transporter superfamily. Lipooligosaccharide exporter (TC 3.A.1.102) family. The complex is composed of two ATP-binding proteins (NodI) and two transmembrane proteins (NodJ).

The protein resides in the cell inner membrane. Its function is as follows. Part of the ABC transporter complex NodIJ involved in the export of the nodulation factors (Nod factors), the bacterial signal molecules that induce symbiosis and subsequent nodulation induction. Nod factors are LCO (lipo-chitin oligosaccharide), a modified beta-1,4-linked N-acetylglucosamine oligosaccharide. This subunit is responsible for energy coupling to the transport system. This Rhizobium leguminosarum bv. trifolii protein is Nod factor export ATP-binding protein I.